An 80-amino-acid chain; its full sequence is Exodeoxyribonuclease 7 small subunit (80 aa).

It belongs to the XseB family. As to quaternary structure, heterooligomer composed of large and small subunits.

The protein localises to the cytoplasm. It catalyses the reaction Exonucleolytic cleavage in either 5'- to 3'- or 3'- to 5'-direction to yield nucleoside 5'-phosphates.. In terms of biological role, bidirectionally degrades single-stranded DNA into large acid-insoluble oligonucleotides, which are then degraded further into small acid-soluble oligonucleotides. The polypeptide is Exodeoxyribonuclease 7 small subunit (Rickettsia felis (strain ATCC VR-1525 / URRWXCal2) (Rickettsia azadi)).